We begin with the raw amino-acid sequence, 442 residues long: Glutamyl-tRNA(Gln) amidotransferase subunit A (442 aa).

Catalysis depends on charge relay system residues lysine 50 and serine 125. Serine 149 functions as the Acyl-ester intermediate in the catalytic mechanism.

This sequence belongs to the amidase family. GatA subfamily. In terms of assembly, heterotrimer of A, B and C subunits.

The catalysed reaction is L-glutamyl-tRNA(Gln) + L-glutamine + ATP + H2O = L-glutaminyl-tRNA(Gln) + L-glutamate + ADP + phosphate + H(+). In terms of biological role, allows the formation of correctly charged Gln-tRNA(Gln) through the transamidation of misacylated Glu-tRNA(Gln) in organisms which lack glutaminyl-tRNA synthetase. The reaction takes place in the presence of glutamine and ATP through an activated gamma-phospho-Glu-tRNA(Gln). This Nitratiruptor sp. (strain SB155-2) protein is Glutamyl-tRNA(Gln) amidotransferase subunit A.